A 244-amino-acid chain; its full sequence is Gas vesicle protein F (244 aa).

The N-terminus stretch occupies residues 1-109 (MTVGLYLYGI…QLKELFAKLS (109 aa)). Residues 110-233 (GQREVSIKIF…GDRLRIRYNN (124 aa)) are C-terminus, modifed ferredoxin fold. The segment at 234-244 (LTAPYTFAQLI) is C-tail.

This sequence belongs to the gas vesicle GvpF/GvpL family. As to quaternary structure, binds GvpA.

Its subcellular location is the gas vesicle. In terms of biological role, a minor component of the gas vesicle, may be involved in preventing GvpA aggregation during gas vesicle nucleation. Gas vesicles (GV) are hollow, gas filled proteinaceous nanostructures. During planktonic growth they allow positioning of the organism at a favorable depth for light or nutrient acquisition. The chain is Gas vesicle protein F from Microcystis aeruginosa (strain PCC 7806).